Consider the following 346-residue polypeptide: DnaJ protein ERDJ3B (346 aa).

The first 23 residues, 1-23 (MAIRWSELCIVLFALSYAICVLA), serve as a signal peptide directing secretion. Residues 26-91 (SYYDVLQVPK…EKREIYNKYG (66 aa)) enclose the J domain. N267 is a glycosylation site (N-linked (GlcNAc...) asparagine).

In terms of assembly, interacts with SDF2 and MED37A/BIP1. Post-translationally, N-glycosylated. As to expression, expressed in leaves, flower buds and flowers.

The protein localises to the endoplasmic reticulum lumen. Functionally, regulates protein folding in the endoplasmic reticulum (ER) lumen. Forms a complex in the ER with SDF2 and MED37A/BIP1 which is required for the proper accumulation and function of the surface-exposed leucine-rich repeat receptor kinases EFR involved in pathogen-associated molecular pattern (PAMP) triggered immunity. This is DnaJ protein ERDJ3B (ERDJ3B) from Arabidopsis thaliana (Mouse-ear cress).